The sequence spans 227 residues: Orotidine 5'-phosphate decarboxylase (227 aa).

Substrate contacts are provided by residues Asp8, Lys30, 58–67 (DLKVHDIPNT), Thr117, Arg177, Gln186, Gly206, and Arg207. The Proton donor role is filled by Lys60.

This sequence belongs to the OMP decarboxylase family. Type 1 subfamily. Homodimer.

It carries out the reaction orotidine 5'-phosphate + H(+) = UMP + CO2. It participates in pyrimidine metabolism; UMP biosynthesis via de novo pathway; UMP from orotate: step 2/2. In terms of biological role, catalyzes the decarboxylation of orotidine 5'-monophosphate (OMP) to uridine 5'-monophosphate (UMP). The polypeptide is Orotidine 5'-phosphate decarboxylase (Campylobacter fetus subsp. fetus (strain 82-40)).